Reading from the N-terminus, the 143-residue chain is Small ribosomal subunit protein uS12 (143 aa).

Residues 1 to 20 (MGKPRGLRTARKLKNHRREQ) show a composition bias toward basic residues. Positions 1-28 (MGKPRGLRTARKLKNHRREQRWHDKDYK) are disordered. Hydroxyproline is present on Pro62.

The protein belongs to the universal ribosomal protein uS12 family. Component of the 40S small ribosomal subunit.

It localises to the cytoplasm. Its subcellular location is the cytosol. The protein localises to the rough endoplasmic reticulum. This is Small ribosomal subunit protein uS12 (RPS23) from Lumbricus rubellus (Humus earthworm).